A 190-amino-acid chain; its full sequence is ATP synthase subunit delta (190 aa).

It belongs to the ATPase delta chain family. F-type ATPases have 2 components, F(1) - the catalytic core - and F(0) - the membrane proton channel. F(1) has five subunits: alpha(3), beta(3), gamma(1), delta(1), epsilon(1). F(0) has three main subunits: a(1), b(2) and c(10-14). The alpha and beta chains form an alternating ring which encloses part of the gamma chain. F(1) is attached to F(0) by a central stalk formed by the gamma and epsilon chains, while a peripheral stalk is formed by the delta and b chains.

The protein resides in the cell inner membrane. F(1)F(0) ATP synthase produces ATP from ADP in the presence of a proton or sodium gradient. F-type ATPases consist of two structural domains, F(1) containing the extramembraneous catalytic core and F(0) containing the membrane proton channel, linked together by a central stalk and a peripheral stalk. During catalysis, ATP synthesis in the catalytic domain of F(1) is coupled via a rotary mechanism of the central stalk subunits to proton translocation. Functionally, this protein is part of the stalk that links CF(0) to CF(1). It either transmits conformational changes from CF(0) to CF(1) or is implicated in proton conduction. The polypeptide is ATP synthase subunit delta (Methylobacterium sp. (strain 4-46)).